Consider the following 465-residue polypeptide: Biotin biosynthesis bifunctional protein BioCD (465 aa).

A malonyl-ACP O-methyltransferase region spans residues 1 to 254 (MTPFLPDRSI…AYGQWRKPRG (254 aa)). Residues Asp-234 and 263 to 268 (GVGKTL) contribute to the ATP site. The tract at residues 255–465 (VFVTGTDTGV…DSLLSSNASR (211 aa)) is DTB synthetase. Thr-267 contacts Mg(2+). The active site involves Lys-283. Thr-287 is a binding site for substrate. ATP-binding positions include Asp-295, 351-354 (EGAG), and 435-437 (PQL). Mg(2+) is bound by residues Asp-295 and Glu-351.

It in the N-terminal section; belongs to the methyltransferase superfamily. In the C-terminal section; belongs to the dethiobiotin synthetase family. Mg(2+) serves as cofactor.

The protein localises to the cytoplasm. The enzyme catalyses (7R,8S)-7,8-diammoniononanoate + CO2 + ATP = (4R,5S)-dethiobiotin + ADP + phosphate + 3 H(+). It catalyses the reaction malonyl-[ACP] + S-adenosyl-L-methionine = malonyl-[ACP] methyl ester + S-adenosyl-L-homocysteine. It participates in cofactor biosynthesis; biotin biosynthesis; biotin from 7,8-diaminononanoate: step 1/2. It functions in the pathway cofactor biosynthesis; biotin biosynthesis. Functionally, converts the free carboxyl group of a malonyl-thioester to its methyl ester by transfer of a methyl group from S-adenosyl-L-methionine (SAM). It allows synthesis of pimeloyl-ACP via the fatty acid synthetic pathway. Its function is as follows. Catalyzes a mechanistically unusual reaction, the ATP-dependent insertion of CO2 between the N7 and N8 nitrogen atoms of 7,8-diaminopelargonic acid (DAPA, also called 7,8-diammoniononanoate) to form a ureido ring. The protein is Biotin biosynthesis bifunctional protein BioCD of Bordetella avium (strain 197N).